A 452-amino-acid chain; its full sequence is mRNA export factor ICP27 homolog (452 aa).

The tract at residues 42–164 (EAIGSTPGED…RNDQTHDESY (123 aa)) is disordered. Residues 98-107 (SNHHGGRDVE) show a composition bias toward basic and acidic residues. Residues 129-144 (SRKHRDRSLSNRRRRP) are compositionally biased toward basic residues. Residues 154-164 (ERNDQTHDESY) are compositionally biased toward basic and acidic residues. Zn(2+)-binding residues include cysteine 335, histidine 417, cysteine 421, and cysteine 426. A CHC2-type zinc finger spans residues 335 to 426 (CLLLNRDNDL…HQRECGRVEC (92 aa)).

Belongs to the HHV-1 ICP27 protein family. As to quaternary structure, homodimer. Homodimerization is required for transactivation. Associates in a complex with RNA, and host export factors NXF1/TAP and ALYREF; these interactions allow nuclear export of viral transcripts. Interacts with three host shuttling SR proteins SRSF1, SRSF3 and SRSF7. Interacts with host SRPK1. Interacts with IE62; this interaction enhances IE62 transactivation. In terms of processing, phosphorylated in vitro by SRPK1.

It localises to the host cytoplasm. The protein resides in the host nucleus. In terms of biological role, multifunctional regulator of the expression of viral genes that mediates nuclear export of viral intronless mRNAs. This immediate early (EI) protein promotes the nuclear export of viral intronless mRNAs by interacting with mRNAs and host NXF1/TAP. This is mRNA export factor ICP27 homolog from Varicella-zoster virus (strain Dumas) (HHV-3).